A 262-amino-acid chain; its full sequence is Thiazole synthase (262 aa).

The Schiff-base intermediate with DXP role is filled by Lys97. Residues Gly158, 185 to 186 (AG), and 207 to 208 (NT) each bind 1-deoxy-D-xylulose 5-phosphate.

The protein belongs to the ThiG family. As to quaternary structure, homotetramer. Forms heterodimers with either ThiH or ThiS.

Its subcellular location is the cytoplasm. The catalysed reaction is [ThiS sulfur-carrier protein]-C-terminal-Gly-aminoethanethioate + 2-iminoacetate + 1-deoxy-D-xylulose 5-phosphate = [ThiS sulfur-carrier protein]-C-terminal Gly-Gly + 2-[(2R,5Z)-2-carboxy-4-methylthiazol-5(2H)-ylidene]ethyl phosphate + 2 H2O + H(+). The protein operates within cofactor biosynthesis; thiamine diphosphate biosynthesis. In terms of biological role, catalyzes the rearrangement of 1-deoxy-D-xylulose 5-phosphate (DXP) to produce the thiazole phosphate moiety of thiamine. Sulfur is provided by the thiocarboxylate moiety of the carrier protein ThiS. In vitro, sulfur can be provided by H(2)S. The protein is Thiazole synthase of Neisseria gonorrhoeae (strain ATCC 700825 / FA 1090).